The following is a 270-amino-acid chain: DNA repair protein RecO (270 aa).

The tract at residues 202–221 (PELPPSTIDADTDNPSQPPS) is disordered.

It belongs to the RecO family.

Functionally, involved in DNA repair and RecF pathway recombination. The polypeptide is DNA repair protein RecO (Rhodopirellula baltica (strain DSM 10527 / NCIMB 13988 / SH1)).